The chain runs to 238 residues: Uridylate kinase (238 aa).

12–15 is an ATP binding site; it reads KLSG. UMP is bound at residue Gly54. Positions 55 and 59 each coordinate ATP. UMP is bound by residues Asp74 and 135-142; that span reads VGAPYFTT. Positions 162, 168, and 171 each coordinate ATP.

It belongs to the UMP kinase family. As to quaternary structure, homohexamer.

It localises to the cytoplasm. It catalyses the reaction UMP + ATP = UDP + ADP. The protein operates within pyrimidine metabolism; CTP biosynthesis via de novo pathway; UDP from UMP (UMPK route): step 1/1. With respect to regulation, inhibited by UTP. Catalyzes the reversible phosphorylation of UMP to UDP. The protein is Uridylate kinase of Erythrobacter litoralis (strain HTCC2594).